Reading from the N-terminus, the 493-residue chain is Acetylcholine receptor subunit epsilon (493 aa).

Positions 1-20 (MARAPLGVLLLLGLLGRGVG) are cleaved as a signal peptide. The Extracellular portion of the chain corresponds to 21-239 (KNEELRLYHH…VIYSLIIRRK (219 aa)). Asn86 and Asn161 each carry an N-linked (GlcNAc...) asparagine glycan. Cys148 and Cys162 form a disulfide bridge. A helical membrane pass occupies residues 240-264 (PLFYVINIIVPCVLISGLVLLAYFL). Topologically, residues 265-272 (PAQAGGQK) are cytoplasmic. A helical transmembrane segment spans residues 273 to 291 (CTVSINVLLAQTVFLFLIA). The Extracellular segment spans residues 292–306 (QKIPETSLSVPLLGR). A helical transmembrane segment spans residues 307–328 (FLIFVMVVATLIVMNCVIVLNV). At 329–456 (SQRTPTTHAM…WVRMGNALDN (128 aa)) the chain is on the cytoplasmic side. The chain crosses the membrane as a helical span at residues 457-480 (ICFWAALVLFSVGSSLIFLGAYFN). The Extracellular segment spans residues 481–493 (RVPDLPYAPCIQP).

This sequence belongs to the ligand-gated ion channel (TC 1.A.9) family. Acetylcholine receptor (TC 1.A.9.1) subfamily. Epsilon/CHRNE sub-subfamily. As to quaternary structure, pentamer of two alpha chains, and one each of the beta, delta, and gamma (in immature muscle) or epsilon (in mature muscle) chains. The muscle heteropentamer composed of alpha-1, beta-1, delta, epsilon subunits interacts with the alpha-conotoxin ImII.

Its subcellular location is the postsynaptic cell membrane. The protein resides in the cell membrane. The catalysed reaction is K(+)(in) = K(+)(out). The enzyme catalyses Na(+)(in) = Na(+)(out). After binding acetylcholine, the AChR responds by an extensive change in conformation that affects all subunits and leads to opening of an ion-conducting channel across the plasma membrane. The sequence is that of Acetylcholine receptor subunit epsilon from Homo sapiens (Human).